Here is a 686-residue protein sequence, read N- to C-terminus: MPASSVRLPLRLLTLAGLLALAGAAALARGAPQGGPPSPQGGPAPTAAPARGPTLFVLVGDGSAWFVFQLGGLGALNDTRIRGHLLGRYLVSYQVVPPPVSAWYFVQRPRERPRLSGPPSGAELVAFDAPGVRRTYTTAAVWPAEVAVLADAEARCPAAVFNVTLGEAFLGLRVALRSFLPLEVIISAERMRMIAPPALGSDLEPPGPPAGRFHVYTLGFLSDGAMHQTMRDVAAYVHESDDYLAQLSAAHAAALAAVVQPGPYYFYRAAVRLGVAAFVFSEAARRDRRASAPALLRVESDARLLSRLLMRAAGCPAGFAGLFDGRAERVPVAPADQLRAAWTFGEDPAPRLDLARATVAEAYRRSVRGKPFDQQALFFAVALLLRAGGPGDARETLLRTTAMCTAERAAAAAELTRAALSPTAAWNEPFSLLDVLSPCAVSLRRDLGGDATLANLGAAARLALAPAGAPGAAAATDEGAEEEEEDPVARAAPEIPAEALLALPLRGGASFVFTRRRPDCGPAYTLGGVDIANPLVLAIVSNDSAACDYTDRMPESQHLPATDNPSVCVYCDCVFVRYSSAGTILETVLIESKDMEEQLMAGANSTIPSFNPTLHGGDVKALMLFPNGTVVDLLSFTSTRLAPVSPAYVVASVVGAAITVGILYALFKMLCSFSSEGYSRLINARS.

Positions 1–24 (MPASSVRLPLRLLTLAGLLALAGA) are cleaved as a signal peptide. Residues 25 to 646 (AALARGAPQG…TSTRLAPVSP (622 aa)) are Virion surface-facing. N-linked (GlcNAc...) asparagine; by host glycans are attached at residues N77, N162, N542, N604, and N627. The interaction with gL stretch occupies residues 157 to 217 (PAAVFNVTLG…PPAGRFHVYT (61 aa)). The chain crosses the membrane as a helical span at residues 647–667 (AYVVASVVGAAITVGILYALF). The Intravirion portion of the chain corresponds to 668 to 686 (KMLCSFSSEGYSRLINARS).

This sequence belongs to the herpesviridae glycoprotein H family. In terms of assembly, interacts with glycoprotein L (gL); this interaction is necessary for the correct processing and cell surface expression of gH. The heterodimer gH/gL seems to interact with gB trimers during fusion. In terms of processing, N-glycosylated, O-glycosylated, and sialylated.

The protein localises to the virion membrane. It localises to the host cell membrane. The protein resides in the host endosome membrane. In terms of biological role, the heterodimer glycoprotein H-glycoprotein L is required for the fusion of viral and plasma membranes leading to virus entry into the host cell. Following initial binding to host receptor, membrane fusion is mediated by the fusion machinery composed of gB and the heterodimer gH/gL. May also be involved in the fusion between the virion envelope and the outer nuclear membrane during virion morphogenesis. The sequence is that of Envelope glycoprotein H from Sus scrofa (Pig).